The sequence spans 314 residues: Homoserine kinase (314 aa).

96-106 (PIGSGLGSSAC) provides a ligand contact to ATP.

This sequence belongs to the GHMP kinase family. Homoserine kinase subfamily.

The protein resides in the cytoplasm. It carries out the reaction L-homoserine + ATP = O-phospho-L-homoserine + ADP + H(+). It functions in the pathway amino-acid biosynthesis; L-threonine biosynthesis; L-threonine from L-aspartate: step 4/5. In terms of biological role, catalyzes the ATP-dependent phosphorylation of L-homoserine to L-homoserine phosphate. The sequence is that of Homoserine kinase from Haemophilus influenzae (strain 86-028NP).